Consider the following 912-residue polypeptide: MTFTKLENSSDQAVVAEEVKILTKLLNESTRQLIGDDAFAKIQDLIDTSASKDQKQLESKISSLNNREMIVVARYFATLPLLINISEDVELASKVNVFNNTDQDYLGKLSDTIDLVAQKDDAKRILENVNVVPVLTAHPTQIQRKTVLELTDKIHHLLRSYRDVKNGTINQREWTEQLRACIEILMQTDIIRGHKLKVSNEITNVLAYYPKALIPAITKFTTRYKELAKEHNLTLDQATPITMGMWIGGDRDGNPYVTADTLELSATLQSQVIFEYYMKELKKLYRAISLSTSYMQPSAAVEKLSKLSNDDSPFRTDEPYRRAFYYIESRLVHTEKELLGIIDKNIFIKPHDLENLDNIPVYNNPQEFKSDLETIKASLDEDHDQAVTHSFFTQILEAIDVFGFHLATIDMRQDSSVNESCVAELLKSAGICDNYSDLSEKEKVELLLSELENDPRNLHANNKPKSELLQKELKIYKTARQLKDRLGEDVIKQHIISHTESVSDMLEQAIMLKEYNLVDSEKARIQVVPLFETVEDLLNAREIITQYLSFPIVKKWLVSQNNYQEIMLGYSDSNKDGGYLASCWNLYKAQKDLTAIGEKLGVKITYMHGRGGTVGRGGGPSYEAITAQPFKSINDRIRMTEQGEIIQNKYGNKDTAYYNLEMLASAAIDRMVSKQAVSEERITDFRSSMDKIVEESNKIYRKLVFENPAFLDYFFQATPIKEISNLNIGSRPASRKKLTDFSGLRAIPWVFSWSQSRIMFPGWYGVGSAFANFINADPTHLKELQEMYKGWPFFHSLLSNVDMFLSKSNMEIAREYASLCDDEETKKVFDIIYQEWKLTKKVILQIEDHDDLLAEAPILKQSLDYRMPYFNILNYIQIEMIKRGREDEIQGVYQSIIPITINGVASGLRNSG.

Catalysis depends on residues histidine 138 and lysine 575.

Belongs to the PEPCase type 1 family. Mg(2+) is required as a cofactor.

It catalyses the reaction oxaloacetate + phosphate = phosphoenolpyruvate + hydrogencarbonate. Its function is as follows. Forms oxaloacetate, a four-carbon dicarboxylic acid source for the tricarboxylic acid cycle. In Lactobacillus acidophilus (strain ATCC 700396 / NCK56 / N2 / NCFM), this protein is Phosphoenolpyruvate carboxylase.